The chain runs to 281 residues: Nicotinamide/nicotinic acid mononucleotide adenylyltransferase 1 (281 aa).

The beta-nicotinamide D-ribonucleotide site is built by glycine 15 and serine 16. 4 residues coordinate NAD(+): glycine 15, serine 16, phenylalanine 17, and methionine 23. Glycine 15 to phenylalanine 17 contributes to the ATP binding site. Position 24 (histidine 24) interacts with ATP. Residues tyrosine 55 and lysine 57 each contribute to the beta-nicotinamide D-ribonucleotide site. Lysine 57 is a binding site for NAD(+). Lysine 58 contacts ATP. Tryptophan 92 and threonine 95 together coordinate beta-nicotinamide D-ribonucleotide. Tryptophan 92 and threonine 95 together coordinate NAD(+). A disordered region spans residues proline 113–glutamate 143. Serine 117 is modified (phosphoserine). The Nuclear localization signal signature appears at proline 123–tryptophan 129. Positions tryptophan 129–glutamate 143 are enriched in basic and acidic residues. NAD(+)-binding residues include glycine 158, aspartate 160, leucine 170, tryptophan 171, glutamate 217, and asparagine 221. Residue glycine 158–aspartate 160 participates in ATP binding. Beta-nicotinamide D-ribonucleotide is bound by residues leucine 170 and tryptophan 171. ATP is bound at residue threonine 226–arginine 229.

The protein belongs to the eukaryotic NMN adenylyltransferase family. As to quaternary structure, homohexamer. Interacts with ADPRT/PARP1. It depends on Zn(2+) as a cofactor. The cofactor is Mg(2+).

Its subcellular location is the nucleus. The enzyme catalyses beta-nicotinamide D-ribonucleotide + ATP + H(+) = diphosphate + NAD(+). It carries out the reaction nicotinate beta-D-ribonucleotide + ATP + H(+) = deamido-NAD(+) + diphosphate. It participates in cofactor biosynthesis; NAD(+) biosynthesis; NAD(+) from nicotinamide D-ribonucleotide: step 1/1. Its pathway is cofactor biosynthesis; NAD(+) biosynthesis; deamido-NAD(+) from nicotinate D-ribonucleotide: step 1/1. Its activity is regulated as follows. Activity is strongly inhibited by galotannin. Inhibited by P1-(adenosine-5')-P4-(nicotinic-acid-riboside-5')-tetraphosphate (Nap4AD). Catalyzes the formation of NAD(+) from nicotinamide mononucleotide (NMN) and ATP. Can also use the deamidated form; nicotinic acid mononucleotide (NaMN) as substrate with the same efficiency. Can use triazofurin monophosphate (TrMP) as substrate. Also catalyzes the reverse reaction, i.e. the pyrophosphorolytic cleavage of NAD(+). For the pyrophosphorolytic activity, prefers NAD(+) and NaAD as substrates and degrades NADH, nicotinic acid adenine dinucleotide phosphate (NHD) and nicotinamide guanine dinucleotide (NGD) less effectively. Involved in the synthesis of ATP in the nucleus, together with PARP1, PARG and NUDT5. Nuclear ATP generation is required for extensive chromatin remodeling events that are energy-consuming. Fails to cleave phosphorylated dinucleotides NADP(+), NADPH and NaADP(+). Also acts as a cofactor for glutamate and aspartate ADP-ribosylation by directing PARP1 catalytic activity to glutamate and aspartate residues on histones. Protects against axonal degeneration following mechanical or toxic insults. Delays axonal degeneration after axotomy. Results in a &gt;10-fold increase in intact neurites 72 hours after injury. Neural protection does not correlate with cellular NAD(+) levels but may still require enzyme activity. The sequence is that of Nicotinamide/nicotinic acid mononucleotide adenylyltransferase 1 (NMNAT1) from Bos taurus (Bovine).